The primary structure comprises 217 residues: Uracil-DNA glycosylase (217 aa).

The Proton acceptor role is filled by aspartate 62.

It belongs to the uracil-DNA glycosylase (UDG) superfamily. UNG family.

The protein localises to the cytoplasm. It carries out the reaction Hydrolyzes single-stranded DNA or mismatched double-stranded DNA and polynucleotides, releasing free uracil.. Its function is as follows. Excises uracil residues from the DNA which can arise as a result of misincorporation of dUMP residues by DNA polymerase or due to deamination of cytosine. This chain is Uracil-DNA glycosylase, found in Streptococcus pneumoniae (strain Hungary19A-6).